Consider the following 213-residue polypeptide: MCQYFLKKIRNVWERWFTYRLWFGLSMVSIAVIFGPLTGAHVNPAVTIDFWEVGKFPTELVLVYIIAQCIGAFIVALIVWLLFKDHLDEEDNQNCQLGSFATIATNSNNLRNLLSEIVTTFSLLFILFTLNHQQPTNGVAMFFVFTGVAGGVMSFGGLTSYAINPARDFMLRLIHAIMPIKNKGTSNFDYAWVPVLRPVIGAILAAWLYKALF.

A helical membrane pass occupies residues 22-42; that stretch reads WFGLSMVSIAVIFGPLTGAHV. The short motif at 43-45 is the NPA 1 element; that stretch reads NPA. The next 3 membrane-spanning stretches (helical) occupy residues 63–83, 112–132, and 138–158; these read VYII…WLLF, NLLS…TLNH, and GVAM…FGGL. An NPA 2 motif is present at residues 164–166; it reads NPA. Residues 188–208 traverse the membrane as a helical segment; sequence FDYAWVPVLRPVIGAILAAWL.

It belongs to the MIP/aquaporin (TC 1.A.8) family.

The protein resides in the cell membrane. This is an uncharacterized protein from Haemophilus influenzae (strain ATCC 51907 / DSM 11121 / KW20 / Rd).